The sequence spans 285 residues: Phosphate import ATP-binding protein PstB (285 aa).

An ABC transporter domain is found at 22 to 262 (MRAVDLTLGF…PQHEETVRYF (241 aa)). 54-61 (GPTGSGKT) contacts ATP. Positions 266–285 (RPAQGSDRGSSQTAGVAESQ) are disordered. Over residues 272–285 (DRGSSQTAGVAESQ) the composition is skewed to polar residues.

Belongs to the ABC transporter superfamily. Phosphate importer (TC 3.A.1.7) family. The complex is composed of two ATP-binding proteins (PstB), two transmembrane proteins (PstC and PstA) and a solute-binding protein (PstS).

The protein resides in the cell membrane. It carries out the reaction phosphate(out) + ATP + H2O = ADP + 2 phosphate(in) + H(+). Its function is as follows. Part of the ABC transporter complex PstSACB involved in phosphate import. Responsible for energy coupling to the transport system. In Mycobacterium intracellulare, this protein is Phosphate import ATP-binding protein PstB.